The chain runs to 108 residues: E3 ubiquitin-protein ligase Midline-1 (108 aa).

The 100-residue stretch at 1–100 (KSAPKHEWIG…IITGLPIPDH (100 aa)) folds into the B30.2/SPRY domain.

Belongs to the TRIM/RBCC family. In terms of assembly, homodimer or heterodimer with MID2. Interacts with IGBP1.

The protein localises to the cytoplasm. Its subcellular location is the cytoskeleton. The catalysed reaction is S-ubiquitinyl-[E2 ubiquitin-conjugating enzyme]-L-cysteine + [acceptor protein]-L-lysine = [E2 ubiquitin-conjugating enzyme]-L-cysteine + N(6)-ubiquitinyl-[acceptor protein]-L-lysine.. Functionally, has E3 ubiquitin ligase activity towards IGBP1, promoting its monoubiquitination, which results in deprotection of the catalytic subunit of protein phosphatase PP2A, and its subsequent degradation by polyubiquitination. The sequence is that of E3 ubiquitin-protein ligase Midline-1 (Mid1) from Mus caroli (Ryukyu mouse).